A 188-amino-acid polypeptide reads, in one-letter code: Tetratricopeptide repeat protein 36 (188 aa).

3 TPR repeats span residues 50–83 (SKALELQAVIAAEAGDLSTALERFGQAINLLPER), 85–117 (SAYNNRAQARRLQGDVAGALEDLERALALSGGR), and 122–155 (RQGFVQRGLVARLQGRDDDARRDFERAARLGSPF).

The protein belongs to the TTC36 family.

The protein is Tetratricopeptide repeat protein 36 (TTC36) of Bos taurus (Bovine).